The following is a 106-amino-acid chain: Violacin-A (106 aa).

Residues 1 to 29 (MDAQKMKMVIGLVLVATTAFALMIPAASA) form the signal peptide. A propeptide spanning residues 30–79 (VDDFITRRAYDNLVKSGAIKDIPVMAKTIISNPVLEEGMLTYYTNKKLGD) is cleaved from the precursor. Disulfide bonds link Cys84-Cys98, Cys88-Cys100, and Cys93-Cys105.

It belongs to the cyclotide family. Moebius subfamily. In terms of processing, violacin-A is not a cyclic peptide.

Probably participates in a plant defense mechanism. Has low hemolytic activity. This is Violacin-A from Viola odorata (Sweet violet).